A 289-amino-acid polypeptide reads, in one-letter code: Iodotyrosine deiodinase 1 (289 aa).

A helical transmembrane segment spans residues 1–21 (MYFLTPILVAILCILVVWIFK). A compositionally biased stretch (basic and acidic residues) spans 47–58 (DLKDSSDLHQAE). The segment at 47 to 69 (DLKDSSDLHQAEEDADEWQESEE) is disordered. Residues 59-69 (EDADEWQESEE) show a composition bias toward acidic residues. FMN is bound by residues 100–104 (RRSVR), Ser128, and 128–129 (SG). 4 residues coordinate 3,5-diiodo-L-tyrosine: Ala130, Glu157, Tyr161, and Lys182. The 3-iodo-L-tyrosine site is built by Ala130, Glu157, Tyr161, and Lys182. Residues 237 to 239 (TTT) and Arg279 each bind FMN.

This sequence belongs to the nitroreductase family. Homodimer. FMN is required as a cofactor.

The protein resides in the cell membrane. Its subcellular location is the cytoplasmic vesicle membrane. It catalyses the reaction 2 iodide + L-tyrosine + 2 NADP(+) = 3,5-diiodo-L-tyrosine + 2 NADPH + H(+). The catalysed reaction is iodide + L-tyrosine + NADP(+) = 3-iodo-L-tyrosine + NADPH. The enzyme catalyses 3-iodo-L-tyrosine + iodide + NADP(+) = 3,5-diiodo-L-tyrosine + NADPH + H(+). It carries out the reaction L-tyrosine + chloride + NADP(+) = 3-chloro-L-tyrosine + NADPH. It catalyses the reaction bromide + L-tyrosine + NADP(+) = 3-bromo-L-tyrosine + NADPH. Its function is as follows. Catalyzes the dehalogenation of halotyrosines such as 3-bromo-L-tyrosine, 3-chloro-L-tyrosine, 3-iodo-L-tyrosine and 3,5-diiodo-L-tyrosine. During thyroid hormone biosynthesis, facilitates iodide salvage by catalysing the oxidative NADPH-dependent deiodination of the halogenated by-products of thyroid hormone production, monoiodotyrosine (L-MIT) and diiodotyrosine (L-DIT). The scavanged iodide can then reenter the hormone-producing pathways. Acts more efficiently on 3-iodo-L-tyrosine than 3,5-diiodo-L-tyrosine. The chain is Iodotyrosine deiodinase 1 (IYD) from Pongo abelii (Sumatran orangutan).